Reading from the N-terminus, the 2869-residue chain is uncharacterized protein (2869 aa).

A compositionally biased stretch (low complexity) spans 1 to 10 (MNINRNNIND). Disordered stretches follow at residues 1–132 (MNIN…SSNK), 171–349 (NNNN…DNYR), 380–485 (FNES…TSSS), 498–517 (KEKH…KPKK), 690–812 (NQNQ…NQNQ), 860–1074 (INNN…INSN), 1108–1175 (INNI…NSNS), 1188–1216 (SNSN…VDVD), 1224–1243 (VFIV…SVKT), 1340–1448 (ESNS…GNNI), 1476–1704 (IDNC…SNYY), 1731–1832 (NSNS…NEGF), and 2725–2773 (DRVR…NNNE). Over residues 14 to 25 (HSTSFNDNFDSF) the composition is skewed to polar residues. Composition is skewed to low complexity over residues 26-124 (GNQN…NPKN), 171-348 (NNNN…YDNY), 388-414 (NNNT…LNNN), 421-446 (YYDN…QTNK), and 454-478 (KNNN…NSNN). The span at 505–514 (HENGDISESK) shows a compositional bias: basic and acidic residues. 2 stretches are compositionally biased toward low complexity: residues 690 to 707 (NQNQ…QNHQ) and 714 to 749 (PQRQ…NQDQ). Over residues 750–763 (YQDHDHEHEHDHDQ) the composition is skewed to basic and acidic residues. A compositionally biased stretch (low complexity) spans 764-781 (NQNQNQNQHQSRNQNQDQ). Residues 782–795 (YQDHDHEHEHDHDQ) are compositionally biased toward basic and acidic residues. Low complexity-rich tracts occupy residues 796–812 (NQNQ…NQNQ), 860–891 (INNN…QSQN), 898–911 (DNRI…SSRD), 921–991 (CDFN…SFNN), and 1000–1074 (NNHN…INSN). Residues 1188–1212 (SNSNGFNNNNSNDQRNIDSSSNSDI) show a composition bias toward low complexity. A compositionally biased stretch (polar residues) spans 1230–1243 (TSSNKSNRASSVKT). Composition is skewed to low complexity over residues 1377–1448 (DNGN…GNNI) and 1476–1639 (IDNC…NDND). Over residues 1640–1659 (IGNDFDNDNDNDSYIDDDNN) the composition is skewed to acidic residues. 3 stretches are compositionally biased toward low complexity: residues 1660–1704 (VYDN…SNYY), 1731–1823 (NSNS…NNNS), and 2739–2754 (SSSG…SGGS). The segment covering 2758–2773 (NLDDSENESDSENNNE) has biased composition (acidic residues).

This is an uncharacterized protein from Dictyostelium discoideum (Social amoeba).